The following is an 854-amino-acid chain: ATP-dependent zinc metalloprotease FtsH (854 aa).

The Cytoplasmic portion of the chain corresponds to 1-5 (MNRKT). The chain crosses the membrane as a helical span at residues 6 to 26 (VFRNVLLVAVVLLVIYAFSYF). Residues 27 to 112 (SNDTRDFKTV…FNTTVTQESW (86 aa)) are Extracellular-facing. The helical transmembrane segment at 113–133 (LTSILLFVLPMIILFGIFFFV) threads the bilayer. At 134–854 (MNRMQGGGGR…ARWDGPDGSR (721 aa)) the chain is on the cytoplasmic side. Residue 207-214 (GPPGTGKT) coordinates ATP. His429 is a Zn(2+) binding site. Glu430 is an active-site residue. Positions 433 and 505 each coordinate Zn(2+). The tract at residues 658–854 (AGAPNSGVPN…ARWDGPDGSR (197 aa)) is disordered. 2 stretches are compositionally biased toward low complexity: residues 661–692 (PNSG…AQPS) and 698–719 (APQQ…WSAP). A compositionally biased stretch (pro residues) spans 720-730 (GWPPRENPSPT). A compositionally biased stretch (low complexity) spans 749-778 (NQSQGQYGQPQHGQPQPDQGQYGQPHPGQQ). Polar residues predominate over residues 812 to 822 (GNPSGENQWQS). Residues 825–834 (PEQPQTPPPH) show a composition bias toward pro residues.

In the central section; belongs to the AAA ATPase family. This sequence in the C-terminal section; belongs to the peptidase M41 family. Homohexamer. Zn(2+) serves as cofactor.

It is found in the cell membrane. Functionally, acts as a processive, ATP-dependent zinc metallopeptidase for both cytoplasmic and membrane proteins. Plays a role in the quality control of integral membrane proteins. The chain is ATP-dependent zinc metalloprotease FtsH from Rhodococcus erythropolis (strain PR4 / NBRC 100887).